Reading from the N-terminus, the 540-residue chain is Probable protein kinase UbiB (540 aa).

The chain crosses the membrane as a helical span at residues 24–44 (LLFEQPLLPWWLASLRLLMPW). The Protein kinase domain maps to 126–494 (RFDVEPLASA…RRRQGDRWAL (369 aa)). ATP-binding positions include 132–140 (LASASVAQV) and Lys-154. Catalysis depends on Asp-289, which acts as the Proton acceptor. The next 2 helical transmembrane spans lie at 496–516 (LLGA…AEAA) and 518–538 (LAAP…YLIV).

This sequence belongs to the ABC1 family. UbiB subfamily.

The protein resides in the cell inner membrane. It participates in cofactor biosynthesis; ubiquinone biosynthesis [regulation]. Its function is as follows. Is probably a protein kinase regulator of UbiI activity which is involved in aerobic coenzyme Q (ubiquinone) biosynthesis. This Pseudomonas putida (strain GB-1) protein is Probable protein kinase UbiB.